Consider the following 134-residue polypeptide: STAG3-like protein 3 (134 aa).

The region spanning 10 to 95 (PKVTCRDVLP…GCFKDWMVSM (86 aa)) is the SCD domain.

This sequence belongs to the SCC3 family.

It is found in the nucleus. In Homo sapiens (Human), this protein is STAG3-like protein 3 (STAG3L3).